The chain runs to 425 residues: MADIMHVFAREILDSRGNPTVEAEVFLDDGSHGVAGVPSGASTGVHEAHELRDGGERYLGKGVLNAVNNVNEEIADAIAGAEADDQRLIDQAMIALDGTENKSRLGANAILGVSIAVAKAAAESAGLPLYRYIGGPNAHVLPVPMMNIVNGGAHADSGVDVQEFMIAPIGAESFSEALRMGAEVYHSLKSVIKSKGLSTGLGDEGGFAPSVESTKAALDLIVEAIEKAGFKPGADIALALDVASSEFYKDGKYHFEGGEHTAEEMAKVYEQLIAEYPIVSIEDPLQEDDWEGYTALTAAIGDKVQIVGDDFFVTNPARLKEGIEKKAANALLVKVNQIGTLTETFDAVDLAHRNGYRTMMSHRSGETEDTTIADLAVALGCGQIKTGAPARSERVAKYNQLLRIEQQLDDAAVYAGRSAFPRFQG.

Gln162 lines the (2R)-2-phosphoglycerate pocket. Glu204 serves as the catalytic Proton donor. Positions 241, 282, and 309 each coordinate Mg(2+). The (2R)-2-phosphoglycerate site is built by Lys334, Arg363, Ser364, and Lys385. The Proton acceptor role is filled by Lys334.

Belongs to the enolase family. Mg(2+) is required as a cofactor.

It localises to the cytoplasm. The protein resides in the secreted. It is found in the cell surface. The enzyme catalyses (2R)-2-phosphoglycerate = phosphoenolpyruvate + H2O. The protein operates within carbohydrate degradation; glycolysis; pyruvate from D-glyceraldehyde 3-phosphate: step 4/5. In terms of biological role, catalyzes the reversible conversion of 2-phosphoglycerate (2-PG) into phosphoenolpyruvate (PEP). It is essential for the degradation of carbohydrates via glycolysis. This chain is Enolase, found in Corynebacterium diphtheriae (strain ATCC 700971 / NCTC 13129 / Biotype gravis).